We begin with the raw amino-acid sequence, 82 residues long: Sulfur carrier protein TusA (82 aa).

The active-site Cysteine persulfide intermediate is the C19.

Belongs to the sulfur carrier protein TusA family.

It localises to the cytoplasm. In terms of biological role, sulfur carrier protein which probably makes part of a sulfur-relay system. This chain is Sulfur carrier protein TusA, found in Vibrio parahaemolyticus serotype O3:K6 (strain RIMD 2210633).